The chain runs to 539 residues: MHDKILILDFGSQVTQLIARRVREAHVYCEIHPNDVSDAFVREFAPKAIILSGSHASTYEDHQLRAPQAVWDLGVPVLGICYGMQTMAVQLGGKVEWSDHREFGYAEMRAHGHTELLKDIEDFRTPEGHGMLKVWMSHGDKVTGLPPGFKLMASTPSCPIAGMADETRHYYAVQFHPEVTHTVKGRQMLERFVLQIAGCKPDWVMRDHIEEAVAKIREQVGDEEVILGLSGGVDSSVAAALIHRAIGDQLTCVFVDHGLLRQDEGKLVMEMFVGRLHAKVVHVDASEQFLGHLAGVTDPEQKRKIIGREFVEVFQAEARKLTNAKWLAQGTIYPDVVESGGTKTKKATTIKSHHNVGGLPETLGLKLLEPLRDLFKDEVRELGVELGLPPEMVYRHPFPGPGLGVRILGEVKRDYADLLRRADAIFIEELRKTIATEHDAAAGLCEPEQVGKSWYDLTSQAFAVFLPVKSVGVMGDGRTYDYVVALRAVQTTDFMTAHWAHLPYALLGRCSNRIINEVRGLNRVVYDVSGKPPATIEWE.

Residues 4 to 202 (KILILDFGSQ…VLQIAGCKPD (199 aa)) enclose the Glutamine amidotransferase type-1 domain. Cysteine 81 functions as the Nucleophile in the catalytic mechanism. Residues histidine 176 and glutamate 178 contribute to the active site. Positions 203-395 (WVMRDHIEEA…LGLPPEMVYR (193 aa)) constitute a GMPS ATP-PPase domain. 230–236 (SGGVDSS) serves as a coordination point for ATP.

As to quaternary structure, homodimer.

It carries out the reaction XMP + L-glutamine + ATP + H2O = GMP + L-glutamate + AMP + diphosphate + 2 H(+). It functions in the pathway purine metabolism; GMP biosynthesis; GMP from XMP (L-Gln route): step 1/1. Its function is as follows. Catalyzes the synthesis of GMP from XMP. The polypeptide is GMP synthase [glutamine-hydrolyzing] (Cupriavidus taiwanensis (strain DSM 17343 / BCRC 17206 / CCUG 44338 / CIP 107171 / LMG 19424 / R1) (Ralstonia taiwanensis (strain LMG 19424))).